The primary structure comprises 672 residues: Methionine--tRNA ligase (672 aa).

The 'HIGH' region signature appears at 12–22; the sequence is AYTNGPLHLGH. Residues Cys-144, Cys-147, Cys-156, and Cys-159 each coordinate Zn(2+). Residues 330–334 carry the 'KMSKS' region motif; it reads KMSTS. Thr-333 contributes to the ATP binding site. The tRNA-binding domain occupies 573–672; the sequence is DFAKIELKVA…KDLPVGSTIC (100 aa).

This sequence belongs to the class-I aminoacyl-tRNA synthetase family. MetG type 1 subfamily. In terms of assembly, homodimer. Zn(2+) serves as cofactor.

The protein localises to the cytoplasm. It carries out the reaction tRNA(Met) + L-methionine + ATP = L-methionyl-tRNA(Met) + AMP + diphosphate. Functionally, is required not only for elongation of protein synthesis but also for the initiation of all mRNA translation through initiator tRNA(fMet) aminoacylation. This is Methionine--tRNA ligase from Methanococcus aeolicus (strain ATCC BAA-1280 / DSM 17508 / OCM 812 / Nankai-3).